Here is a 906-residue protein sequence, read N- to C-terminus: Ankyrin repeat and MYND domain-containing protein 1 (906 aa).

MORN repeat units follow at residues 16–38 (YHGQ…DGSS), 39–59 (FTGT…TKTM), and 61–83 (FQGL…DGSQ). The stretch at 282–311 (KGYTVLAAAAMHSHLDIVNLLLDFGADVNK) is one ANK 1 repeat. Residues 391-400 (SMQTPESSNM) are compositionally biased toward polar residues. The interval 391 to 411 (SMQTPESSNMLHKEEVSPVKT) is disordered. 6 ANK repeats span residues 479-508 (VRKM…DPNL), 511-540 (VPMQ…QTDI), 547-579 (QSLT…NVDA), 623-657 (GGRT…NPNV), 660-689 (SGHS…DPNL), and 701-732 (VVCD…DVLN). 8 residues coordinate Zn(2+): C845, C848, C859, C862, C868, C872, H881, and C885. An MYND-type zinc finger spans residues 845-885 (CYQCGRSIGVRLSPCPRCYGILTCSKYCKTKAWIEFHKKDC).

This chain is Ankyrin repeat and MYND domain-containing protein 1 (Ankmy1), found in Mus musculus (Mouse).